Consider the following 90-residue polypeptide: Movement protein (90 aa).

A helical membrane pass occupies residues 32–52 (FVFVTFGLLIAVGVAWLAYTL).

This sequence belongs to the mastrevirus movement protein family. Interacts with the capsid protein (CP). Part of a MP-CP-viral DNA complex.

The protein localises to the host membrane. Involved in the viral transport within, and between cells. The sequence is that of Movement protein from Wheat dwarf virus (isolate Sweden) (WDV).